We begin with the raw amino-acid sequence, 971 residues long: Exportin-2 (971 aa).

At methionine 1 the chain carries N-acetylmethionine. Residues 29–102 (AEKFLESVEG…KANIVHLMLS (74 aa)) form the Importin N-terminal domain. Serine 112 carries the post-translational modification Phosphoserine. 2 positions are modified to N6-acetyllysine: lysine 574 and lysine 824. Position 931 is a phosphoserine (serine 931).

The protein belongs to the XPO2/CSE1 family. Found in a complex with CSE1L/XPO2, Ran and KPNA2. Binds with high affinity to importin-alpha only in the presence of RanGTP. The complex is dissociated by the combined action of RanBP1 and RanGAP1. Interacts with CFTR. As to expression, ubiquitous. Detected in embryos from 5 to 17 dpc. Highly expressed in adult testis, heart, brain, lung, liver, skeletal muscle, spleen and kidney.

Its subcellular location is the cytoplasm. The protein resides in the nucleus. In terms of biological role, export receptor for importin-alpha. Mediates importin-alpha re-export from the nucleus to the cytoplasm after import substrates (cargos) have been released into the nucleoplasm. In the nucleus binds cooperatively to importin-alpha and to the GTPase Ran in its active GTP-bound form. Docking of this trimeric complex to the nuclear pore complex (NPC) is mediated through binding to nucleoporins. Upon transit of a nuclear export complex into the cytoplasm, disassembling of the complex and hydrolysis of Ran-GTP to Ran-GDP (induced by RANBP1 and RANGAP1, respectively) cause release of the importin-alpha from the export receptor. CSE1L/XPO2 then return to the nuclear compartment and mediate another round of transport. The directionality of nuclear export is thought to be conferred by an asymmetric distribution of the GTP- and GDP-bound forms of Ran between the cytoplasm and nucleus. The polypeptide is Exportin-2 (Cse1l) (Mus musculus (Mouse)).